A 301-amino-acid polypeptide reads, in one-letter code: Indole-3-glycerol phosphate synthase (301 aa).

The protein belongs to the TrpC family.

The enzyme catalyses 1-(2-carboxyphenylamino)-1-deoxy-D-ribulose 5-phosphate + H(+) = (1S,2R)-1-C-(indol-3-yl)glycerol 3-phosphate + CO2 + H2O. The protein operates within amino-acid biosynthesis; L-tryptophan biosynthesis; L-tryptophan from chorismate: step 4/5. The sequence is that of Indole-3-glycerol phosphate synthase from Prochlorococcus marinus (strain MIT 9313).